Consider the following 226-residue polypeptide: 7-cyano-7-deazaguanine synthase (226 aa).

7–17 (LSGGMDSLVTT) contacts ATP. The Zn(2+) site is built by C187, C195, C198, and C201.

Belongs to the QueC family. Zn(2+) serves as cofactor.

The catalysed reaction is 7-carboxy-7-deazaguanine + NH4(+) + ATP = 7-cyano-7-deazaguanine + ADP + phosphate + H2O + H(+). It participates in purine metabolism; 7-cyano-7-deazaguanine biosynthesis. In terms of biological role, catalyzes the ATP-dependent conversion of 7-carboxy-7-deazaguanine (CDG) to 7-cyano-7-deazaguanine (preQ(0)). This chain is 7-cyano-7-deazaguanine synthase, found in Chloroherpeton thalassium (strain ATCC 35110 / GB-78).